Consider the following 335-residue polypeptide: Ketol-acid reductoisomerase (NADP(+)) (335 aa).

The KARI N-terminal Rossmann domain maps to 5-185 (SKIYTDKDSN…GATRAGVIPT (181 aa)). Residues 28 to 31 (YGSQ), S56, and 86 to 89 (DMVQ) contribute to the NADP(+) site. The active site involves H111. Position 137 (G137) interacts with NADP(+). The region spanning 186 to 331 (TFKEETETDL…NQLKDLIQKG (146 aa)) is the KARI C-terminal knotted domain. 4 residues coordinate Mg(2+): D194, E198, E230, and E234. S255 is a substrate binding site.

It belongs to the ketol-acid reductoisomerase family. Mg(2+) serves as cofactor.

The enzyme catalyses (2R)-2,3-dihydroxy-3-methylbutanoate + NADP(+) = (2S)-2-acetolactate + NADPH + H(+). It carries out the reaction (2R,3R)-2,3-dihydroxy-3-methylpentanoate + NADP(+) = (S)-2-ethyl-2-hydroxy-3-oxobutanoate + NADPH + H(+). The protein operates within amino-acid biosynthesis; L-isoleucine biosynthesis; L-isoleucine from 2-oxobutanoate: step 2/4. Its pathway is amino-acid biosynthesis; L-valine biosynthesis; L-valine from pyruvate: step 2/4. Functionally, involved in the biosynthesis of branched-chain amino acids (BCAA). Catalyzes an alkyl-migration followed by a ketol-acid reduction of (S)-2-acetolactate (S2AL) to yield (R)-2,3-dihydroxy-isovalerate. In the isomerase reaction, S2AL is rearranged via a Mg-dependent methyl migration to produce 3-hydroxy-3-methyl-2-ketobutyrate (HMKB). In the reductase reaction, this 2-ketoacid undergoes a metal-dependent reduction by NADPH to yield (R)-2,3-dihydroxy-isovalerate. The polypeptide is Ketol-acid reductoisomerase (NADP(+)) (Saccharolobus islandicus (strain M.16.27) (Sulfolobus islandicus)).